The sequence spans 96 residues: Co-chaperonin GroES (96 aa).

Belongs to the GroES chaperonin family. As to quaternary structure, heptamer of 7 subunits arranged in a ring. Interacts with the chaperonin GroEL.

The protein resides in the cytoplasm. Functionally, together with the chaperonin GroEL, plays an essential role in assisting protein folding. The GroEL-GroES system forms a nano-cage that allows encapsulation of the non-native substrate proteins and provides a physical environment optimized to promote and accelerate protein folding. GroES binds to the apical surface of the GroEL ring, thereby capping the opening of the GroEL channel. This Teredinibacter turnerae (strain ATCC 39867 / T7901) protein is Co-chaperonin GroES.